The chain runs to 325 residues: Tagatose 1,6-diphosphate aldolase (325 aa).

This sequence belongs to the aldolase LacD family.

The enzyme catalyses D-tagatofuranose 1,6-bisphosphate = D-glyceraldehyde 3-phosphate + dihydroxyacetone phosphate. It participates in carbohydrate metabolism; D-tagatose 6-phosphate degradation; D-glyceraldehyde 3-phosphate and glycerone phosphate from D-tagatose 6-phosphate: step 2/2. The protein is Tagatose 1,6-diphosphate aldolase of Staphylococcus haemolyticus (strain JCSC1435).